A 317-amino-acid polypeptide reads, in one-letter code: OVARIAN TUMOR DOMAIN-containing deubiquitinating enzyme 4 (317 aa).

The OTU domain occupies 168-306 (YSIIGIPGDG…FGHYDALLLH (139 aa)). Residue Asp-176 is part of the active site. Cys-179 acts as the Nucleophile in catalysis. The active site involves His-299.

Belongs to the peptidase C65 family.

The protein resides in the cytoplasm. It carries out the reaction Thiol-dependent hydrolysis of ester, thioester, amide, peptide and isopeptide bonds formed by the C-terminal Gly of ubiquitin (a 76-residue protein attached to proteins as an intracellular targeting signal).. Hydrolase that can remove conjugated ubiquitin from proteins in vitro and may therefore play an important regulatory role at the level of protein turnover by preventing degradation. Cysteine protease with a preference for 'Lys-63' over 'Lys-48'-linked over 'Met-1' ubiquitin (UB) tetramers (e.g. Ub3 and Ub4) as substrates. Also cleaves RUB-GST fusion. The chain is OVARIAN TUMOR DOMAIN-containing deubiquitinating enzyme 4 from Arabidopsis thaliana (Mouse-ear cress).